Here is a 481-residue protein sequence, read N- to C-terminus: 3-isopropylmalate dehydratase large subunit (481 aa).

The [4Fe-4S] cluster site is built by Cys-357, Cys-417, and Cys-420. Residues 429 to 441 (SPGQRCASTSNRN) are compositionally biased toward polar residues. A disordered region spans residues 429–451 (SPGQRCASTSNRNFEGRQGKGGR).

It belongs to the aconitase/IPM isomerase family. LeuC type 1 subfamily. In terms of assembly, heterodimer of LeuC and LeuD. It depends on [4Fe-4S] cluster as a cofactor.

The enzyme catalyses (2R,3S)-3-isopropylmalate = (2S)-2-isopropylmalate. The protein operates within amino-acid biosynthesis; L-leucine biosynthesis; L-leucine from 3-methyl-2-oxobutanoate: step 2/4. Functionally, catalyzes the isomerization between 2-isopropylmalate and 3-isopropylmalate, via the formation of 2-isopropylmaleate. The polypeptide is 3-isopropylmalate dehydratase large subunit (Mycobacterium sp. (strain JLS)).